A 266-amino-acid polypeptide reads, in one-letter code: Calpain small subunit 1 (266 aa).

At methionine 1 the chain carries N-acetylmethionine. Serine 6 carries the post-translational modification Phosphoserine. The EF-hand 1; atypical domain maps to 94 to 128 (EEVRQFRRLFAQLAGDDMEVSATELMNILNKVVTR). The Ca(2+) site is built by alanine 107, aspartate 110, glutamate 112, glutamate 117, aspartate 135, aspartate 150, aspartate 152, threonine 154, lysine 156, and glutamate 161. EF-hand domains are found at residues 137-170 (FGLD…NNIK), 167-202 (NNIK…AGFH), 203-231 (LNEH…ISCL), and 232-266 (VRLD…TMYS). Position 177 is an N6-acetyllysine (lysine 177). Aspartate 180, aspartate 182, serine 184, threonine 186, glutamate 191, and aspartate 223 together coordinate Ca(2+).

Homodimer or heterodimer of a large (catalytic) and a small (regulatory) subunit. In presence of calcium, the heterodimer dissociates. In terms of processing, the N-terminus is blocked.

The protein localises to the cytoplasm. The protein resides in the cell membrane. Functionally, regulatory subunit of the calcium-regulated non-lysosomal thiol-protease which catalyzes limited proteolysis of substrates involved in cytoskeletal remodeling and signal transduction. Essential for embryonic development. The protein is Calpain small subunit 1 (CAPNS1) of Oryctolagus cuniculus (Rabbit).